A 409-amino-acid chain; its full sequence is NADH-quinone oxidoreductase subunit D (409 aa).

It belongs to the complex I 49 kDa subunit family. NDH-1 is composed of 14 different subunits. Subunits NuoB, C, D, E, F, and G constitute the peripheral sector of the complex.

It localises to the cell inner membrane. The catalysed reaction is a quinone + NADH + 5 H(+)(in) = a quinol + NAD(+) + 4 H(+)(out). Its function is as follows. NDH-1 shuttles electrons from NADH, via FMN and iron-sulfur (Fe-S) centers, to quinones in the respiratory chain. The immediate electron acceptor for the enzyme in this species is believed to be ubiquinone. Couples the redox reaction to proton translocation (for every two electrons transferred, four hydrogen ions are translocated across the cytoplasmic membrane), and thus conserves the redox energy in a proton gradient. The polypeptide is NADH-quinone oxidoreductase subunit D (nuoD) (Thermus thermophilus (strain ATCC BAA-163 / DSM 7039 / HB27)).